Consider the following 262-residue polypeptide: Nitrilase (262 aa).

Residues 2–237 (VKVAYVQMNP…EEVGVAEIDL (236 aa)) enclose the CN hydrolase domain. Glu42 acts as the Proton acceptor in catalysis. The active-site Proton donor is Lys113. The active-site Nucleophile is the Cys146. Substrate is bound at residue 173-174 (VM).

The protein belongs to the carbon-nitrogen hydrolase superfamily. As to quaternary structure, homodimer.

The catalysed reaction is a nitrile + 2 H2O = a carboxylate + NH4(+). Its activity is regulated as follows. Enzymatic activity is inhibited in the presence of acetone, methanol and metal ions such as Ag(2+) and Hg(2+). Is also inhibited by various thiol reagents such as DTNB, p-chloromercuribenzoate, p-hydroxymercuribenzoate, iodacetamide and iodacetate. EDTA has no influence on activity. Its function is as follows. Nitrilase that hydrolyzes preferentially aliphatic nitriles like malononitrile and fumaronitrile in vitro. These dinitriles are converted to the corresponding monoacid mononitriles, showing the enzyme is regioselective. Cannot hydrolyze compounds with a nitrile group bound to an aromatic ring or amino acid. Its biological role is unknown. This Pyrococcus abyssi (strain GE5 / Orsay) protein is Nitrilase.